A 306-amino-acid polypeptide reads, in one-letter code: Recombination-associated protein RdgC (306 aa).

Belongs to the RdgC family.

Its subcellular location is the cytoplasm. It localises to the nucleoid. Its function is as follows. May be involved in recombination. The sequence is that of Recombination-associated protein RdgC from Pseudomonas paraeruginosa (strain DSM 24068 / PA7) (Pseudomonas aeruginosa (strain PA7)).